The following is a 236-amino-acid chain: 2,3,4,5-tetrahydropyridine-2,6-dicarboxylate N-acetyltransferase (236 aa).

This sequence belongs to the transferase hexapeptide repeat family. DapH subfamily.

The catalysed reaction is (S)-2,3,4,5-tetrahydrodipicolinate + acetyl-CoA + H2O = L-2-acetamido-6-oxoheptanedioate + CoA. It participates in amino-acid biosynthesis; L-lysine biosynthesis via DAP pathway; LL-2,6-diaminopimelate from (S)-tetrahydrodipicolinate (acetylase route): step 1/3. In terms of biological role, catalyzes the transfer of an acetyl group from acetyl-CoA to tetrahydrodipicolinate. This chain is 2,3,4,5-tetrahydropyridine-2,6-dicarboxylate N-acetyltransferase, found in Clostridium botulinum (strain Alaska E43 / Type E3).